We begin with the raw amino-acid sequence, 577 residues long: 2-succinyl-5-enolpyruvyl-6-hydroxy-3-cyclohexene-1-carboxylate synthase (577 aa).

Belongs to the TPP enzyme family. MenD subfamily. Homodimer. Mg(2+) is required as a cofactor. It depends on Mn(2+) as a cofactor. The cofactor is thiamine diphosphate.

It carries out the reaction isochorismate + 2-oxoglutarate + H(+) = 5-enolpyruvoyl-6-hydroxy-2-succinyl-cyclohex-3-ene-1-carboxylate + CO2. Its pathway is quinol/quinone metabolism; 1,4-dihydroxy-2-naphthoate biosynthesis; 1,4-dihydroxy-2-naphthoate from chorismate: step 2/7. The protein operates within quinol/quinone metabolism; menaquinone biosynthesis. Its function is as follows. Catalyzes the thiamine diphosphate-dependent decarboxylation of 2-oxoglutarate and the subsequent addition of the resulting succinic semialdehyde-thiamine pyrophosphate anion to isochorismate to yield 2-succinyl-5-enolpyruvyl-6-hydroxy-3-cyclohexene-1-carboxylate (SEPHCHC). In Porphyromonas gingivalis (strain ATCC BAA-308 / W83), this protein is 2-succinyl-5-enolpyruvyl-6-hydroxy-3-cyclohexene-1-carboxylate synthase.